A 75-amino-acid chain; its full sequence is Small capsomere-interacting protein (75 aa).

The protein belongs to the herpesviridae small capsomere-interacting protein family. Interacts with the major capsid protein/MCP.

It localises to the virion. The protein resides in the host nucleus. Participates in the assembly of the infectious particles by decorating the outer surface of the capsid shell and thus forming a layer between the capsid and the tegument. Complexes composed of the major capsid protein and small capsomere-interacting protein/SCP assemble together in the host cytoplasm and are translocated to the nucleus, where they accumulate and participate in capsid assembly. The sequence is that of Small capsomere-interacting protein from Homo sapiens (Human).